The primary structure comprises 61 residues: Small ribosomal subunit protein uS14B (61 aa).

4 residues coordinate Zn(2+): Cys-24, Cys-27, Cys-40, and Cys-43.

This sequence belongs to the universal ribosomal protein uS14 family. Zinc-binding uS14 subfamily. As to quaternary structure, part of the 30S ribosomal subunit. Contacts proteins S3 and S10. It depends on Zn(2+) as a cofactor.

Binds 16S rRNA, required for the assembly of 30S particles and may also be responsible for determining the conformation of the 16S rRNA at the A site. The protein is Small ribosomal subunit protein uS14B of Salinispora arenicola (strain CNS-205).